A 141-amino-acid polypeptide reads, in one-letter code: Large-conductance mechanosensitive channel (141 aa).

The next 3 membrane-spanning stretches (helical) occupy residues 16-36 (VIDL…VDSV), 40-60 (LIMP…MFIV), and 86-106 (GNFL…FLMV).

Belongs to the MscL family. As to quaternary structure, homopentamer.

Its subcellular location is the cell inner membrane. Functionally, channel that opens in response to stretch forces in the membrane lipid bilayer. May participate in the regulation of osmotic pressure changes within the cell. This Cupriavidus necator (strain ATCC 17699 / DSM 428 / KCTC 22496 / NCIMB 10442 / H16 / Stanier 337) (Ralstonia eutropha) protein is Large-conductance mechanosensitive channel.